We begin with the raw amino-acid sequence, 158 residues long: 2-C-methyl-D-erythritol 2,4-cyclodiphosphate synthase (158 aa).

A divalent metal cation is bound by residues Asp9 and His11. 4-CDP-2-C-methyl-D-erythritol 2-phosphate is bound by residues 9–11 (DVH) and 35–36 (HS). His43 provides a ligand contact to a divalent metal cation. Residues 57–59 (DIG), 62–66 (FPDTD), 101–107 (AQKPKMA), 133–136 (TTTE), Phe140, and Arg143 each bind 4-CDP-2-C-methyl-D-erythritol 2-phosphate.

This sequence belongs to the IspF family. As to quaternary structure, homotrimer. Requires a divalent metal cation as cofactor.

It carries out the reaction 4-CDP-2-C-methyl-D-erythritol 2-phosphate = 2-C-methyl-D-erythritol 2,4-cyclic diphosphate + CMP. Its pathway is isoprenoid biosynthesis; isopentenyl diphosphate biosynthesis via DXP pathway; isopentenyl diphosphate from 1-deoxy-D-xylulose 5-phosphate: step 4/6. Functionally, involved in the biosynthesis of isopentenyl diphosphate (IPP) and dimethylallyl diphosphate (DMAPP), two major building blocks of isoprenoid compounds. Catalyzes the conversion of 4-diphosphocytidyl-2-C-methyl-D-erythritol 2-phosphate (CDP-ME2P) to 2-C-methyl-D-erythritol 2,4-cyclodiphosphate (ME-CPP) with a corresponding release of cytidine 5-monophosphate (CMP). The sequence is that of 2-C-methyl-D-erythritol 2,4-cyclodiphosphate synthase from Bacillus thuringiensis subsp. konkukian (strain 97-27).